Here is a 702-residue protein sequence, read N- to C-terminus: Polyribonucleotide nucleotidyltransferase 3 (702 aa).

Positions 483 and 489 each coordinate Mg(2+). A KH domain is found at proline 550 to isoleucine 609. The 69-residue stretch at glycine 619–lysine 687 folds into the S1 motif domain.

This sequence belongs to the polyribonucleotide nucleotidyltransferase family. Requires Mg(2+) as cofactor.

Its subcellular location is the cytoplasm. It carries out the reaction RNA(n+1) + phosphate = RNA(n) + a ribonucleoside 5'-diphosphate. Its function is as follows. Involved in mRNA degradation. Catalyzes the phosphorolysis of single-stranded polyribonucleotides processively in the 3'- to 5'-direction. The chain is Polyribonucleotide nucleotidyltransferase 3 from Alkaliphilus metalliredigens (strain QYMF).